Reading from the N-terminus, the 175-residue chain is Glutamyl-tRNA(Gln) amidotransferase subunit C, mitochondrial (175 aa).

It belongs to the GatC family. In terms of assembly, subunit of the heterotrimeric GatCAB amidotransferase (AdT) complex, composed of A, B and C subunits.

The protein resides in the mitochondrion. It carries out the reaction L-glutamyl-tRNA(Gln) + L-glutamine + ATP + H2O = L-glutaminyl-tRNA(Gln) + L-glutamate + ADP + phosphate + H(+). In terms of biological role, allows the formation of correctly charged Gln-tRNA(Gln) through the transamidation of misacylated Glu-tRNA(Gln) in the mitochondria. The reaction takes place in the presence of glutamine and ATP through an activated gamma-phospho-Glu-tRNA(Gln). This is Glutamyl-tRNA(Gln) amidotransferase subunit C, mitochondrial from Caenorhabditis elegans.